The sequence spans 232 residues: 6-phosphogluconolactonase (232 aa).

The protein belongs to the glucosamine/galactosamine-6-phosphate isomerase family. 6-phosphogluconolactonase subfamily.

The catalysed reaction is 6-phospho-D-glucono-1,5-lactone + H2O = 6-phospho-D-gluconate + H(+). It participates in carbohydrate degradation; pentose phosphate pathway; D-ribulose 5-phosphate from D-glucose 6-phosphate (oxidative stage): step 2/3. Its function is as follows. Hydrolysis of 6-phosphogluconolactone to 6-phosphogluconate. The polypeptide is 6-phosphogluconolactonase (pgl) (Aggregatibacter actinomycetemcomitans (Actinobacillus actinomycetemcomitans)).